The primary structure comprises 540 residues: Chaperonin GroEL (540 aa).

ATP contacts are provided by residues 29 to 32 (TLGP), 86 to 90 (DGTTT), G413, 476 to 478 (NAA), and D492.

The protein belongs to the chaperonin (HSP60) family. As to quaternary structure, forms a cylinder of 14 subunits composed of two heptameric rings stacked back-to-back. Interacts with the co-chaperonin GroES.

It is found in the cytoplasm. The catalysed reaction is ATP + H2O + a folded polypeptide = ADP + phosphate + an unfolded polypeptide.. Functionally, together with its co-chaperonin GroES, plays an essential role in assisting protein folding. The GroEL-GroES system forms a nano-cage that allows encapsulation of the non-native substrate proteins and provides a physical environment optimized to promote and accelerate protein folding. The sequence is that of Chaperonin GroEL from Streptococcus agalactiae.